We begin with the raw amino-acid sequence, 486 residues long: Cobyric acid synthase (486 aa).

The GATase cobBQ-type domain occupies 251–439; it reads RAKIVVPMLS…VHGLFERGEA (189 aa). Cys-333 functions as the Nucleophile in the catalytic mechanism. His-431 is an active-site residue.

It belongs to the CobB/CobQ family. CobQ subfamily.

It functions in the pathway cofactor biosynthesis; adenosylcobalamin biosynthesis. Catalyzes amidations at positions B, D, E, and G on adenosylcobyrinic A,C-diamide. NH(2) groups are provided by glutamine, and one molecule of ATP is hydrogenolyzed for each amidation. In Caulobacter sp. (strain K31), this protein is Cobyric acid synthase.